A 421-amino-acid chain; its full sequence is Zinc metalloproteinase-disintegrin-like lachestatin-2 (421 aa).

The 197-residue stretch at lysine 10–proline 206 folds into the Peptidase M12B domain. Intrachain disulfides connect cysteine 121/cysteine 201, cysteine 161/cysteine 185, and cysteine 163/cysteine 168. Histidine 146 serves as a coordination point for Zn(2+). Residue glutamate 147 is part of the active site. 2 residues coordinate Zn(2+): histidine 150 and histidine 156. The Disintegrin domain occupies proline 214–asparagine 299. Ca(2+)-binding residues include valine 216, asparagine 219, phenylalanine 221, glutamate 223, glutamate 226, and aspartate 229. 14 disulfide bridges follow: cysteine 217–cysteine 246, cysteine 228–cysteine 241, cysteine 230–cysteine 236, cysteine 240–cysteine 263, cysteine 254–cysteine 260, cysteine 259–cysteine 285, cysteine 272–cysteine 292, cysteine 279–cysteine 310, cysteine 303–cysteine 315, cysteine 322–cysteine 372, cysteine 337–cysteine 383, cysteine 350–cysteine 360, cysteine 367–cysteine 409, and cysteine 403–cysteine 414. A D/ECD-tripeptide motif is present at residues glutamate 278–aspartate 280. Residues aspartate 280, methionine 281, aspartate 283, aspartate 294, and arginine 295 each contribute to the Ca(2+) site. An N-linked (GlcNAc...) asparagine glycan is attached at asparagine 312.

The protein belongs to the venom metalloproteinase (M12B) family. P-III subfamily. P-IIIc sub-subfamily. In terms of assembly, homodimer; disulfide-linked. The cofactor is Zn(2+). In terms of tissue distribution, expressed by the venom gland.

It localises to the secreted. Functionally, snake venom zinc metalloprotease that induces apoptosis in vascular endothelial cells (VEC), without degrading the extracellular matrix (it cannot cleave collagen) or inhibiting adhesion of VEC. Has also fibrinogenolytic and hemorrhagic activities. In Lachesis muta rhombeata (Bushmaster), this protein is Zinc metalloproteinase-disintegrin-like lachestatin-2.